The primary structure comprises 128 residues: Fluoride-specific ion channel FluC (128 aa).

The next 4 helical transmembrane spans lie at 4–24, 39–59, 71–91, and 99–119; these read LLLALIVGLGGFLGASLRYLI, GTLIANILGALLIGFIMEFSM, FLTTGIMGGLTTFSTFSYETI, and MTLGIENIILNLGCSLLFVVI. Na(+)-binding residues include Gly78 and Thr81.

This sequence belongs to the fluoride channel Fluc/FEX (TC 1.A.43) family.

The protein localises to the cell membrane. It catalyses the reaction fluoride(in) = fluoride(out). Na(+) is not transported, but it plays an essential structural role and its presence is essential for fluoride channel function. Its function is as follows. Fluoride-specific ion channel. Important for reducing fluoride concentration in the cell, thus reducing its toxicity. The protein is Fluoride-specific ion channel FluC of Clostridium perfringens (strain 13 / Type A).